Consider the following 124-residue polypeptide: Small ribosomal subunit protein bS6 (124 aa).

The segment at 99–124 (PLPAPRIVPGSEPEPVEQQEAAAVEA) is disordered. Positions 114–124 (VEQQEAAAVEA) are enriched in low complexity.

The protein belongs to the bacterial ribosomal protein bS6 family.

Functionally, binds together with bS18 to 16S ribosomal RNA. The chain is Small ribosomal subunit protein bS6 from Prochlorococcus marinus (strain MIT 9303).